A 689-amino-acid chain; its full sequence is Centrosomal protein of 78 kDa (689 aa).

Phosphoserine is present on residues Ser325 and Ser327. 3 disordered regions span residues 432-451, 563-589, and 614-689; these read SSEV…VPEK, PQMT…EPKQ, and DSFP…TESH. Positions 450 to 505 form a coiled coil; sequence EKTSIEQEALQEKLEECLKQLKEERVIRLKVDKRVSELEHENAQLRNINFSLSEAL. Basic and acidic residues-rich tracts occupy residues 573-587 and 666-689; these read PKEE…KPEP and QRKE…TESH.

Belongs to the CEP78 family. Interacts with PLK4. Interacts with FAM161A. Interacts with IFT20; regulating IFT20 stability and localization. Interacts with TTC21A; regulating TTC21A stability and localization. Interacts with USP16; promoting USP16-dependent deubiquitination of tektins. Interacts with DCAF1/VPRBP; promoting localization of the EDVP complex to centrosomes. Interacts with CEP350; promoting CEP78 localization to centrosome and centriole. In terms of tissue distribution, widely expressed. Expressed in different retinal cell types with higher expression in cone compared to rod cells (at protein level).

The protein localises to the cytoplasm. It localises to the cytoskeleton. The protein resides in the microtubule organizing center. It is found in the centrosome. Its subcellular location is the centriole. The protein localises to the cilium basal body. Centriole wall protein that localizes to mature centrioles and regulates centriole and cilia biogenesis. Involved in centrosome duplication: required for efficient PLK4 centrosomal localization and PLK4-induced overduplication of centrioles. Involved in cilium biogenesis and controls cilium length. Acts as a regulator of protein stability by preventing ubiquitination of centrosomal proteins, such as CCP110 and tektins. Associates with the EDVP complex, preventing ubiquitination and degradation of CCP110. Promotes deubiquitination of tektin proteins (TEKT1, TEKT2, TEK3, TEKT4 and TEKT5) via its interaction with USP16. The chain is Centrosomal protein of 78 kDa from Homo sapiens (Human).